The primary structure comprises 277 residues: Digeranylgeranylglyceryl phosphate synthase (277 aa).

A run of 8 helical transmembrane segments spans residues 16-36 (ILAG…IPPV), 40-60 (ILIF…NDYF), 93-113 (FIGL…ALGA), 129-149 (FIGN…GAVG), 153-173 (IDLA…REIM), 199-218 (SGII…FLPV), 222-244 (IGLG…IDVL), and 253-273 (GQKI…LGAL).

The protein belongs to the UbiA prenyltransferase family. DGGGP synthase subfamily. Mg(2+) is required as a cofactor.

The protein localises to the cell membrane. The catalysed reaction is sn-3-O-(geranylgeranyl)glycerol 1-phosphate + (2E,6E,10E)-geranylgeranyl diphosphate = 2,3-bis-O-(geranylgeranyl)-sn-glycerol 1-phosphate + diphosphate. It participates in membrane lipid metabolism; glycerophospholipid metabolism. In terms of biological role, prenyltransferase that catalyzes the transfer of the geranylgeranyl moiety of geranylgeranyl diphosphate (GGPP) to the C2 hydroxyl of (S)-3-O-geranylgeranylglyceryl phosphate (GGGP). This reaction is the second ether-bond-formation step in the biosynthesis of archaeal membrane lipids. In Pyrococcus horikoshii (strain ATCC 700860 / DSM 12428 / JCM 9974 / NBRC 100139 / OT-3), this protein is Digeranylgeranylglyceryl phosphate synthase.